We begin with the raw amino-acid sequence, 249 residues long: MADS-box transcription factor 18 (249 aa).

An MADS-box domain is found at 1-61 (MGRGPVQLRR…GKLYEFSSHS (61 aa)). Residues 88–179 (QENWGDEYGI…KLMETEKEKN (92 aa)) enclose the K-box domain. Residues 184-249 (NTNREEQNGA…PPWMLRTSHT (66 aa)) form a disordered region. The span at 210 to 236 (PTTNNSQSQPRGSGESEAQPSPAQAGN) shows a compositional bias: polar residues.

In terms of tissue distribution, widely expressed. Transcripts accumulate to higher levels in organs that retain meristematic characteristics: in the apical meristem and in the meristematic leaf primordia formed on its flank; in the developing panicle at the early stage of rachis-branch primordia differentiation; in the procambium of the rachis branches and in all floral organ primordia.

The protein localises to the nucleus. Probable transcription factor. The polypeptide is MADS-box transcription factor 18 (MADS18) (Oryza sativa subsp. indica (Rice)).